We begin with the raw amino-acid sequence, 1295 residues long: Phosphoribosylformylglycinamidine synthase (1295 aa).

ATP-binding positions include 305-316 (GAATGSGGEIRD), 384-386 (TGY), and A676. Mg(2+)-binding residues include D677, E716, N720, and D884. S886 contacts ATP. The Glutamine amidotransferase type-1 domain maps to 1042–1295 (VAILREQGVN…MFRNARKHLG (254 aa)). The active-site Nucleophile is C1135. Catalysis depends on residues H1260 and E1262.

It in the N-terminal section; belongs to the FGAMS family. As to quaternary structure, monomer.

The protein resides in the cytoplasm. The enzyme catalyses N(2)-formyl-N(1)-(5-phospho-beta-D-ribosyl)glycinamide + L-glutamine + ATP + H2O = 2-formamido-N(1)-(5-O-phospho-beta-D-ribosyl)acetamidine + L-glutamate + ADP + phosphate + H(+). It functions in the pathway purine metabolism; IMP biosynthesis via de novo pathway; 5-amino-1-(5-phospho-D-ribosyl)imidazole from N(2)-formyl-N(1)-(5-phospho-D-ribosyl)glycinamide: step 1/2. Functionally, phosphoribosylformylglycinamidine synthase involved in the purines biosynthetic pathway. Catalyzes the ATP-dependent conversion of formylglycinamide ribonucleotide (FGAR) and glutamine to yield formylglycinamidine ribonucleotide (FGAM) and glutamate. The protein is Phosphoribosylformylglycinamidine synthase of Idiomarina loihiensis (strain ATCC BAA-735 / DSM 15497 / L2-TR).